Reading from the N-terminus, the 259-residue chain is Methyltransferase sdnD (259 aa).

This sequence belongs to the FkbM methyltransferase family.

The protein operates within antibiotic biosynthesis. In terms of biological role, methyltransferase; part of the gene cluster that mediates the biosynthesis of sordarin and hypoxysordarin, glycoside antibiotics with a unique tetracyclic diterpene aglycone structure. First, the geranylgeranyl diphosphate synthase sdnC constructs GGDP from farnesyl diphosphate and isopentenyl diphosphate. The diterpene cyclase sdnA then catalyzes the cyclization of GGDP to afford cycloaraneosene. Cycloaraneosene is then hydroxylated four times by the putative cytochrome P450 monooxygenases sdnB, sdnE, sdnF and sdnH to give a hydroxylated cycloaraneosene derivative such as cycloaraneosene-8,9,13,19-tetraol. Although the order of the hydroxylations is unclear, at least C8, C9 and C13 of the cycloaraneosene skeleton are hydroxylated before the sordaricin formation. Dehydration of the 13-hydroxy group of the hydroxylated cycloaraneosene derivative might be catalyzed by an unassigned hypothetical protein such as sdnG and sdnP to construct the cyclopentadiene moiety. The FAD-dependent oxidoreductase sdnN is proposed to catalyze the oxidation at C9 of the hydroxylated cycloaraneosene derivative and also catalyze the Baeyer-Villiger oxidation to give the lactone intermediate. The presumed lactone intermediate would be hydrolyzed to give an acrolein moiety and a carboxylate moiety. Then, [4+2]cycloaddition would occur between the acrolein moiety and the cyclopentadiene moiety to give sordaricin. SdnN might also be involved in the [4+2]cycloaddition after the hypothesized oxidation to accommodate the oxidized product and prompt the [4+2]cycloaddition. GDP-6-deoxy-D-altrose may be biosynthesized from GDP-D-mannose by the putative GDP-mannose-4,6-dehydratase sdnI and the short-chain dehydrogenase sdnK. The glycosyltransferase sdnJ catalyzes the attachment of 6-deoxy-D-altrose onto the 19-hydroxy group of sordaricin to give 4'-O-demethylsordarin. The methyltransferase sdnD would complete the biosynthesis of sordarin. Sordarin can be further modified into hypoxysordarin. The unique acyl chain at the 3'-hydroxy group of hypoxysordarin would be constructed by an iterative type I PKS sdnO and the trans-acting polyketide methyltransferase sdnL. SdnL would be responsible for the introduction of an alpha-methyl group of the polyketide chain. Alternatively, the beta-lactamase-like protein sdnR might be responsible for the cleavage and transfer of the polyketide chain from the PKS sdnO to sordarin. Two putative cytochrome P450 monooxygenases, sdnQ and sdnT, might catalyze the epoxidations of the polyketide chain to complete the biosynthesis of hypoxysordarin. Transcriptional regulators sdnM and sdnS are presumably encoded for the transcriptional regulation of the expression of the sdn gene cluster. This is Methyltransferase sdnD from Sordaria araneosa (Pleurage araneosa).